An 841-amino-acid chain; its full sequence is Translation initiation factor IF-2 (841 aa).

The tract at residues 94-255 (QRSPEEIEAE…RNAHGFQSPT (162 aa)) is disordered. The span at 96–135 (SPEEIEAERKREMDERRAVENAARQKAEEEAKRRAEEDAR) shows a compositional bias: basic and acidic residues. Residues 136–175 (NQPAAGQPASAPAQPVAAAEPVREAPAAAAPAPASAAPSA) show a composition bias toward low complexity. Composition is skewed to basic and acidic residues over residues 176–217 (DARK…EKAP) and 225–234 (TTDEESDSFR). Residues 235–248 (RGGRGKGKLKKRNA) are compositionally biased toward basic residues. In terms of domain architecture, tr-type G spans 341 to 510 (SRAPVVTVMG…LLQAEVLELK (170 aa)). Positions 350–357 (GHVDHGKT) are G1. GTP is bound at residue 350–357 (GHVDHGKT). The segment at 375-379 (GITQH) is G2. The segment at 396 to 399 (DTPG) is G3. Residues 396 to 400 (DTPGH) and 450 to 453 (NKID) each bind GTP. Residues 450–453 (NKID) are G4. Residues 486-488 (SAK) are G5.

This sequence belongs to the TRAFAC class translation factor GTPase superfamily. Classic translation factor GTPase family. IF-2 subfamily.

It localises to the cytoplasm. In terms of biological role, one of the essential components for the initiation of protein synthesis. Protects formylmethionyl-tRNA from spontaneous hydrolysis and promotes its binding to the 30S ribosomal subunits. Also involved in the hydrolysis of GTP during the formation of the 70S ribosomal complex. The polypeptide is Translation initiation factor IF-2 (Pseudomonas syringae pv. tomato (strain ATCC BAA-871 / DC3000)).